A 486-amino-acid polypeptide reads, in one-letter code: Sensor protein PhoQ (486 aa).

Over Met1–Arg16 the chain is Cytoplasmic. A helical transmembrane segment spans residues Phe17 to Leu37. Residues Ile38–Trp194 are Periplasmic-facing. The a divalent metal cation site is built by Asp151 and Asp152. The helical transmembrane segment at Phe195–Trp215 threads the bilayer. One can recognise an HAMP domain in the interval Trp215–Asp266. Residues Trp216 to Glu486 lie on the Cytoplasmic side of the membrane. The 207-residue stretch at Asp274–His480 folds into the Histidine kinase domain. His277 is modified (phosphohistidine; by autocatalysis). Asn385 contacts Mg(2+). Residues Asn385–Tyr393, Asp415–Ile420, and Arg434–Leu446 each bind ATP. Gln442 provides a ligand contact to Mg(2+).

In terms of assembly, homodimer; probably dimerizes via the cytoplasmic domain. Probably interacts with MgrB in the periplasm, altering its activity and that of downstream effector PhoP.

Its subcellular location is the cell inner membrane. The catalysed reaction is ATP + protein L-histidine = ADP + protein N-phospho-L-histidine.. With respect to regulation, acetyl-CoA acts as a non-competitive inhibitor of the PhoQ autokinase activity. Feedback inhibited by MgrB, which seems to bind PhoQ, altering its activity and that of downstream effector PhoP. Functionally, member of the two-component regulatory system PhoP/PhoQ involved in adaptation to low Mg(2+) environments and the control of acid resistance genes. In low periplasmic Mg(2+), PhoQ functions as a membrane-associated protein kinase that undergoes autophosphorylation and subsequently transfers the phosphate to PhoP, resulting in the expression of PhoP-activated genes (PAG) and repression of PhoP-repressed genes (PRG). In high periplasmic Mg(2+), acts as a protein phosphatase that dephosphorylates phospho-PhoP, resulting in the repression of PAG and may lead to expression of some PRG. PhoP-regulated transcription is redox-sensitive, being activated when the periplasm becomes more reducing (deletion of dsbA/dsbB, or treatment with dithiothreitol). MgrB acts between DsbA/DsbB and PhoP/PhoQ in this pathway; the 2 periplasmic Cys residues of MgrB are required for its action on PhoQ, which then acts on PhoP. Mediates magnesium influx to the cytosol by activation of mgtA. Promotes expression of the two-component regulatory system rstA/rstB and transcription of the hemL, mgrB, nagA, slyB, vboR and yrbL genes. The polypeptide is Sensor protein PhoQ (phoQ) (Escherichia coli (strain K12)).